A 233-amino-acid chain; its full sequence is Ribosome maturation factor RimM (233 aa).

Residues 1 to 51 are disordered; that stretch reads MKRKQDSKGAGSRGQGAGEKKQGAGGRGQGEKKQKKSPVPSPQSPVPDPDE. A compositionally biased stretch (gly residues) spans 11–28; that stretch reads GSRGQGAGEKKQGAGGRG. In terms of domain architecture, PRC barrel spans 145-226; the sequence is GEDEYHVVDL…RIEITPPPGL (82 aa).

It belongs to the RimM family. Binds ribosomal protein uS19.

Its subcellular location is the cytoplasm. In terms of biological role, an accessory protein needed during the final step in the assembly of 30S ribosomal subunit, possibly for assembly of the head region. Essential for efficient processing of 16S rRNA. May be needed both before and after RbfA during the maturation of 16S rRNA. It has affinity for free ribosomal 30S subunits but not for 70S ribosomes. The protein is Ribosome maturation factor RimM of Trichormus variabilis (strain ATCC 29413 / PCC 7937) (Anabaena variabilis).